A 141-amino-acid polypeptide reads, in one-letter code: uncharacterized protein (141 aa).

The MaoC-like domain maps to 8 to 112 (IGQVFKTKSL…VLDKQPKRNE (105 aa)).

This is an uncharacterized protein from Bacillus subtilis (strain 168).